The following is a 333-amino-acid chain: Probable tRNA-dihydrouridine synthase 1 (333 aa).

FMN contacts are provided by residues 17–19 (PMA) and Gln-71. The active-site Proton donor is the Cys-102. Residues Lys-141, 202 to 204 (NGD), and 226 to 227 (GR) contribute to the FMN site.

It belongs to the Dus family. It depends on FMN as a cofactor.

The enzyme catalyses a 5,6-dihydrouridine in tRNA + NAD(+) = a uridine in tRNA + NADH + H(+). It carries out the reaction a 5,6-dihydrouridine in tRNA + NADP(+) = a uridine in tRNA + NADPH + H(+). Its function is as follows. Catalyzes the synthesis of 5,6-dihydrouridine (D), a modified base found in the D-loop of most tRNAs, via the reduction of the C5-C6 double bond in target uridines. This is Probable tRNA-dihydrouridine synthase 1 (dus1) from Bacillus subtilis (strain 168).